A 256-amino-acid chain; its full sequence is DNA repair protein RecO (256 aa).

It belongs to the RecO family.

Functionally, involved in DNA repair and RecF pathway recombination. In Anaeromyxobacter sp. (strain Fw109-5), this protein is DNA repair protein RecO.